A 475-amino-acid chain; its full sequence is MSPKTETKASVGFQAGVKDYRLTYYTPEYQTKDTDILAAFRVTPQPGVPPEEAGAAVAAESSTGTWTTVWTDGLTSLDRYKGRCYDLEPVPGEDNLFIAYVAYPLDLFEVGSVTNMFTSIVGNVFGYKALRALRLEDLRIPPAYIKTFQGPPHGIQVERDKLNKYGRPLLGCTIKPKLGLSAKNYGRAVYECLRGGLDFTKDDENVNSQPFMRWRDRFVFCAEALNKAQAETGEIKGHYLNATAGTCEEMIKRAVFARELGVPIVMHDYLTGGFTANTSLAHYCRDNGLLLHIHRAMHAVIDRQKNHGMHFRVLAKALRLSGGDHIHGGTVVGKLEGEREITLGFVDLLRDDFVEKDRSRGIYFTQDWVSMPGVLPVASGGIHVWHMPALTEIFGDDAVLQFGGGTLGHPWGNAPGAVANRVALEACVQARNEGRDLVREGNEVIREASKWSAELAAACEVWKEIKFEFAPVDTV.

Positions 1 to 2 are excised as a propeptide; the sequence is MS. At Pro-3 the chain carries N-acetylproline. Substrate is bound by residues Asn-123 and Thr-173. The active-site Proton acceptor is the Lys-175. Lys-177 is a binding site for substrate. The Mg(2+) site is built by Lys-201, Asp-203, and Glu-204. At Lys-201 the chain carries N6-carboxylysine. His-294 acts as the Proton acceptor in catalysis. Substrate contacts are provided by Arg-295, His-327, and Ser-379.

Belongs to the RuBisCO large chain family. Type I subfamily. As to quaternary structure, heterohexadecamer of 8 large chains and 8 small chains; disulfide-linked. The disulfide link is formed within the large subunit homodimers. Mg(2+) serves as cofactor. Post-translationally, the disulfide bond which can form in the large chain dimeric partners within the hexadecamer appears to be associated with oxidative stress and protein turnover.

It is found in the plastid. The protein localises to the chloroplast. The catalysed reaction is 2 (2R)-3-phosphoglycerate + 2 H(+) = D-ribulose 1,5-bisphosphate + CO2 + H2O. It catalyses the reaction D-ribulose 1,5-bisphosphate + O2 = 2-phosphoglycolate + (2R)-3-phosphoglycerate + 2 H(+). In terms of biological role, ruBisCO catalyzes two reactions: the carboxylation of D-ribulose 1,5-bisphosphate, the primary event in carbon dioxide fixation, as well as the oxidative fragmentation of the pentose substrate in the photorespiration process. Both reactions occur simultaneously and in competition at the same active site. The protein is Ribulose bisphosphate carboxylase large chain of Gnetum parvifolium (Small-leaved jointfir).